The sequence spans 932 residues: Alanine--tRNA ligase (932 aa).

The Zn(2+) site is built by His623, His627, Cys726, and His730. Residues 893–916 (RVGGGGGGPPDFAQGGGPDVDSLD) are disordered. Over residues 894 to 910 (VGGGGGGPPDFAQGGGP) the composition is skewed to gly residues.

This sequence belongs to the class-II aminoacyl-tRNA synthetase family. It depends on Zn(2+) as a cofactor.

It is found in the cytoplasm. It carries out the reaction tRNA(Ala) + L-alanine + ATP = L-alanyl-tRNA(Ala) + AMP + diphosphate. Functionally, catalyzes the attachment of alanine to tRNA(Ala) in a two-step reaction: alanine is first activated by ATP to form Ala-AMP and then transferred to the acceptor end of tRNA(Ala). Also edits incorrectly charged Ser-tRNA(Ala) and Gly-tRNA(Ala) via its editing domain. The polypeptide is Alanine--tRNA ligase (Natronomonas pharaonis (strain ATCC 35678 / DSM 2160 / CIP 103997 / JCM 8858 / NBRC 14720 / NCIMB 2260 / Gabara) (Halobacterium pharaonis)).